We begin with the raw amino-acid sequence, 123 residues long: RxLR effector protein Avh262 (123 aa).

Residues 1-18 (MLPVAVVLVVFAVAVTSA) form the signal peptide. Residues 24-46 (VNPLPRRRRLKGTEEKGHHTNVN) form a disordered region. The short motif at 30-50 (RRRLKGTEEKGHHTNVNDEER) is the RxLR-dEER element. The segment covering 34–46 (KGTEEKGHHTNVN) has biased composition (basic and acidic residues). Positions 60 to 82 (LISKLKVKINAKLLAGDSAKPAT) are biP-binding.

It belongs to the RxLR effector family. Interacts with host plant ER-luminal binding immunoglobulin proteins (BiPs) such as soybean BiP1, BiP2, BiP3 and BiP4.

It localises to the secreted. The protein localises to the host endoplasmic reticulum. Its function is as follows. Effector that suppresses plant defense responses during the early stages of pathogen infection. Suppresses cell death induced by effectors and PAMPs in plant hosts. Avh262 stabilizes endoplasmic reticulum (ER)-luminal binding immunoglobulin proteins (BiPs), which act as negative regulators of plant resistance to Phytophthora. By stabilizing BiPs, Avh262 suppresses ER stress-triggered cell death and facilitates Phytophthora infection. The protein is RxLR effector protein Avh262 of Phytophthora sojae (Soybean stem and root rot agent).